Consider the following 900-residue polypeptide: Phosphoenolpyruvate carboxylase (900 aa).

Catalysis depends on residues H140 and K568.

The protein belongs to the PEPCase type 1 family. Requires Mg(2+) as cofactor.

The enzyme catalyses oxaloacetate + phosphate = phosphoenolpyruvate + hydrogencarbonate. Its function is as follows. Forms oxaloacetate, a four-carbon dicarboxylic acid source for the tricarboxylic acid cycle. The polypeptide is Phosphoenolpyruvate carboxylase (Neisseria meningitidis serogroup A / serotype 4A (strain DSM 15465 / Z2491)).